We begin with the raw amino-acid sequence, 113 residues long: Large ribosomal subunit protein bL17 (113 aa).

Belongs to the bacterial ribosomal protein bL17 family. As to quaternary structure, part of the 50S ribosomal subunit. Contacts protein L32.

The chain is Large ribosomal subunit protein bL17 from Clostridium tetani (strain Massachusetts / E88).